Here is an 80-residue protein sequence, read N- to C-terminus: Exodeoxyribonuclease 7 small subunit (80 aa).

This sequence belongs to the XseB family. In terms of assembly, heterooligomer composed of large and small subunits.

It is found in the cytoplasm. It catalyses the reaction Exonucleolytic cleavage in either 5'- to 3'- or 3'- to 5'-direction to yield nucleoside 5'-phosphates.. In terms of biological role, bidirectionally degrades single-stranded DNA into large acid-insoluble oligonucleotides, which are then degraded further into small acid-soluble oligonucleotides. The protein is Exodeoxyribonuclease 7 small subunit of Klebsiella pneumoniae (strain 342).